Here is a 266-residue protein sequence, read N- to C-terminus: MSRTYTTTAIVLKATPLGEADRLLTLLSPDQGLLRVVATGARKPRSKLGGRTALFVVGDCLIACGKSLDRLQQVETLTSHTALSGDLARLAAAQYLTELVLAQALERHPQPELFALLCRDLARIETQSGLEVLPYLLQSTWQLLAWAGWAPQTHYCCLTQQAVQPRLEQSRWRVRYSPSLGGVLADTAAYQRRPNQRELLLTATELAALQQIPTSQTVLPLASLPREAWQMLERALRHSAEYHLERPLQSALLLETLLTGSHVASV.

Belongs to the RecO family.

Functionally, involved in DNA repair and RecF pathway recombination. The protein is DNA repair protein RecO of Synechococcus elongatus (strain ATCC 33912 / PCC 7942 / FACHB-805) (Anacystis nidulans R2).